The sequence spans 129 residues: Fluoride-specific ion channel FluC 2 (129 aa).

Transmembrane regions (helical) follow at residues 4–24 (LDVM…WWIG), 39–59 (TFLI…LFGV), 65–85 (YGTM…TTFS), and 100–120 (GGLA…AAWL). Residues glycine 79 and threonine 82 each contribute to the Na(+) site.

It belongs to the fluoride channel Fluc/FEX (TC 1.A.43) family.

Its subcellular location is the cell inner membrane. It carries out the reaction fluoride(in) = fluoride(out). Na(+) is not transported, but it plays an essential structural role and its presence is essential for fluoride channel function. In terms of biological role, fluoride-specific ion channel. Important for reducing fluoride concentration in the cell, thus reducing its toxicity. The protein is Fluoride-specific ion channel FluC 2 of Brucella suis biovar 1 (strain 1330).